The following is a 347-amino-acid chain: FK506-binding protein-like (347 aa).

Residues 1 to 36 (METSLISPMKENNTAQPQQREENTQQNLNAAVPIKQ) are disordered. A Phosphothreonine modification is found at Thr-3. 3 TPR repeats span residues 208–241 (AKEEHRRGTELFRAGNPQGAARCYGRALRLLLTL), 250–283 (TILHANLAACQLLLGHPQLAAQSCDRVLEREPGH), and 284–317 (LKALYRRGVAQAALGDLDKATADLKKVLAVDPKN).

As to quaternary structure, forms a ternary complex with CDKN1A/p21 and HSP90AB1/Hsp90.

May be involved in response to X-ray. Regulates p21 protein stability by binding to Hsp90 and p21. The sequence is that of FK506-binding protein-like (Fkbpl) from Rattus norvegicus (Rat).